Reading from the N-terminus, the 396-residue chain is Tryptophan synthase beta chain (396 aa).

An N6-(pyridoxal phosphate)lysine modification is found at Lys-86.

The protein belongs to the TrpB family. As to quaternary structure, tetramer of two alpha and two beta chains. Pyridoxal 5'-phosphate is required as a cofactor.

It carries out the reaction (1S,2R)-1-C-(indol-3-yl)glycerol 3-phosphate + L-serine = D-glyceraldehyde 3-phosphate + L-tryptophan + H2O. It participates in amino-acid biosynthesis; L-tryptophan biosynthesis; L-tryptophan from chorismate: step 5/5. Its function is as follows. The beta subunit is responsible for the synthesis of L-tryptophan from indole and L-serine. The sequence is that of Tryptophan synthase beta chain from Proteus mirabilis (strain HI4320).